The chain runs to 378 residues: Erythronate-4-phosphate dehydrogenase (378 aa).

Substrate is bound by residues S45 and T66. Residues D146 and T175 each coordinate NAD(+). R208 is a catalytic residue. D232 serves as a coordination point for NAD(+). E237 is an active-site residue. H254 functions as the Proton donor in the catalytic mechanism. G257 lines the NAD(+) pocket. Residue Y258 coordinates substrate.

Belongs to the D-isomer specific 2-hydroxyacid dehydrogenase family. PdxB subfamily. As to quaternary structure, homodimer.

It localises to the cytoplasm. It carries out the reaction 4-phospho-D-erythronate + NAD(+) = (R)-3-hydroxy-2-oxo-4-phosphooxybutanoate + NADH + H(+). It functions in the pathway cofactor biosynthesis; pyridoxine 5'-phosphate biosynthesis; pyridoxine 5'-phosphate from D-erythrose 4-phosphate: step 2/5. In terms of biological role, catalyzes the oxidation of erythronate-4-phosphate to 3-hydroxy-2-oxo-4-phosphonooxybutanoate. In Escherichia coli O139:H28 (strain E24377A / ETEC), this protein is Erythronate-4-phosphate dehydrogenase.